The primary structure comprises 37 residues: Cytochrome b6-f complex subunit 5 (37 aa).

Residues 5-25 traverse the membrane as a helical segment; sequence LLSGIVLGLVPVTIAGLFVTA.

This sequence belongs to the PetG family. In terms of assembly, the 4 large subunits of the cytochrome b6-f complex are cytochrome b6, subunit IV (17 kDa polypeptide, PetD), cytochrome f and the Rieske protein, while the 4 small subunits are PetG, PetL, PetM and PetN. The complex functions as a dimer.

It is found in the plastid. Its subcellular location is the chloroplast thylakoid membrane. In terms of biological role, component of the cytochrome b6-f complex, which mediates electron transfer between photosystem II (PSII) and photosystem I (PSI), cyclic electron flow around PSI, and state transitions. PetG is required for either the stability or assembly of the cytochrome b6-f complex. This chain is Cytochrome b6-f complex subunit 5, found in Chlorella vulgaris (Green alga).